A 264-amino-acid chain; its full sequence is Thymidylate synthase (264 aa).

Residue arginine 21 coordinates dUMP. Histidine 51 provides a ligand contact to (6R)-5,10-methylene-5,6,7,8-tetrahydrofolate. 126-127 (RR) provides a ligand contact to dUMP. Cysteine 146 acts as the Nucleophile in catalysis. Residues 166-169 (RSCD), asparagine 177, and 207-209 (HLY) contribute to the dUMP site. Aspartate 169 is a binding site for (6R)-5,10-methylene-5,6,7,8-tetrahydrofolate. Residue alanine 263 coordinates (6R)-5,10-methylene-5,6,7,8-tetrahydrofolate.

It belongs to the thymidylate synthase family. Bacterial-type ThyA subfamily. In terms of assembly, homodimer.

It localises to the cytoplasm. The enzyme catalyses dUMP + (6R)-5,10-methylene-5,6,7,8-tetrahydrofolate = 7,8-dihydrofolate + dTMP. It participates in pyrimidine metabolism; dTTP biosynthesis. Catalyzes the reductive methylation of 2'-deoxyuridine-5'-monophosphate (dUMP) to 2'-deoxythymidine-5'-monophosphate (dTMP) while utilizing 5,10-methylenetetrahydrofolate (mTHF) as the methyl donor and reductant in the reaction, yielding dihydrofolate (DHF) as a by-product. This enzymatic reaction provides an intracellular de novo source of dTMP, an essential precursor for DNA biosynthesis. In Salmonella paratyphi C (strain RKS4594), this protein is Thymidylate synthase.